A 278-amino-acid chain; its full sequence is Sulfate transport system permease protein CysT (278 aa).

A run of 7 helical transmembrane segments spans residues 22-42, 67-87, 102-122, 139-159, 188-208, 217-237, and 246-266; these read FTWVYLTLILFIPIIALFLKS, FGLSLAAAALNGVFGVIIAWV, FIDLPFALPTAVAGLTLATVY, IAFTRWGVLLAMVFISLPFVV, FWRVILPPILPGVLAGVAQGF, SVVIISGNLPFDDLIAPVLIF, and AGATVIGSVLLLFSLVILFVI. Residues 63–266 enclose the ABC transmembrane type-1 domain; that stretch reads YEVTFGLSLA…LFSLVILFVI (204 aa).

The protein belongs to the binding-protein-dependent transport system permease family. CysTW subfamily. In terms of assembly, the complex is composed of two ATP-binding proteins (CysA), two transmembrane proteins (CysT and CysW) and a solute-binding protein (CysP).

It is found in the cell inner membrane. Its function is as follows. Part of the ABC transporter complex CysAWTP (TC 3.A.1.6.1) involved in sulfate/thiosulfate import. Probably responsible for the translocation of the substrate across the membrane. This Synechococcus elongatus (strain ATCC 33912 / PCC 7942 / FACHB-805) (Anacystis nidulans R2) protein is Sulfate transport system permease protein CysT (cysT).